A 211-amino-acid chain; its full sequence is Thiamine-phosphate synthase (211 aa).

Residues 36–40 (QLREK) and Asn-68 each bind 4-amino-2-methyl-5-(diphosphooxymethyl)pyrimidine. Mg(2+)-binding residues include Asp-69 and Asp-88. 4-amino-2-methyl-5-(diphosphooxymethyl)pyrimidine is bound at residue Ser-107. 133-135 (TGS) lines the 2-[(2R,5Z)-2-carboxy-4-methylthiazol-5(2H)-ylidene]ethyl phosphate pocket. Position 136 (Lys-136) interacts with 4-amino-2-methyl-5-(diphosphooxymethyl)pyrimidine. 2-[(2R,5Z)-2-carboxy-4-methylthiazol-5(2H)-ylidene]ethyl phosphate contacts are provided by residues Gly-167 and 187–188 (IT).

This sequence belongs to the thiamine-phosphate synthase family. It depends on Mg(2+) as a cofactor.

The catalysed reaction is 2-[(2R,5Z)-2-carboxy-4-methylthiazol-5(2H)-ylidene]ethyl phosphate + 4-amino-2-methyl-5-(diphosphooxymethyl)pyrimidine + 2 H(+) = thiamine phosphate + CO2 + diphosphate. It catalyses the reaction 2-(2-carboxy-4-methylthiazol-5-yl)ethyl phosphate + 4-amino-2-methyl-5-(diphosphooxymethyl)pyrimidine + 2 H(+) = thiamine phosphate + CO2 + diphosphate. It carries out the reaction 4-methyl-5-(2-phosphooxyethyl)-thiazole + 4-amino-2-methyl-5-(diphosphooxymethyl)pyrimidine + H(+) = thiamine phosphate + diphosphate. It participates in cofactor biosynthesis; thiamine diphosphate biosynthesis; thiamine phosphate from 4-amino-2-methyl-5-diphosphomethylpyrimidine and 4-methyl-5-(2-phosphoethyl)-thiazole: step 1/1. Functionally, condenses 4-methyl-5-(beta-hydroxyethyl)thiazole monophosphate (THZ-P) and 2-methyl-4-amino-5-hydroxymethyl pyrimidine pyrophosphate (HMP-PP) to form thiamine monophosphate (TMP). The chain is Thiamine-phosphate synthase from Haloarcula marismortui (strain ATCC 43049 / DSM 3752 / JCM 8966 / VKM B-1809) (Halobacterium marismortui).